Consider the following 215-residue polypeptide: Adenylate kinase (215 aa).

ATP is bound at residue 10-15 (GSGKGT). Positions 30–59 (STGDLFRTNIENDTPLGKEIKQIVENGQLV) are NMP. Residues Thr31, Arg36, 57–59 (QLV), 85–88 (GFPR), and Gln92 contribute to the AMP site. An LID region spans residues 121–158 (GRRICQSCCKIFNIYTLPTKEKEICDFCQGILYQRKDD). An ATP-binding site is contributed by Arg122. Cys125 and Cys128 together coordinate Zn(2+). 131 to 132 (IF) serves as a coordination point for ATP. Residues Cys145 and Cys148 each coordinate Zn(2+). AMP contacts are provided by Arg155 and Arg166. Lys194 provides a ligand contact to ATP.

This sequence belongs to the adenylate kinase family. In terms of assembly, monomer.

It localises to the cytoplasm. The enzyme catalyses AMP + ATP = 2 ADP. It participates in purine metabolism; AMP biosynthesis via salvage pathway; AMP from ADP: step 1/1. In terms of biological role, catalyzes the reversible transfer of the terminal phosphate group between ATP and AMP. Plays an important role in cellular energy homeostasis and in adenine nucleotide metabolism. The chain is Adenylate kinase from Borrelia recurrentis (strain A1).